The following is a 642-amino-acid chain: Capsid vertex component 2 (642 aa).

The interaction with major capsid protein/MCP stretch occupies residues 1 to 48 (MSLLHTFWRLPVAVFFEPHEENVLRCPERVLRRLLEDAAVTMRGGGWR). Residues 97–125 (DEGPSPRTLLQPPCRPRSSSPGTGVAGAS) are disordered.

It belongs to the herpesviridae CVC2 protein family. In terms of assembly, heterodimerizes with CVC1. Interacts with major capsid protein/MCP and triplex capsid protein 1/TRX1 at the pentamer vertices. Interacts with the large tegument protein/LTP.

It localises to the virion. It is found in the host nucleus. In terms of biological role, capsid vertex-specific component that plays a role during viral DNA encapsidation, assuring correct genome cleavage and presumably stabilizing capsids that contain full-length viral genomes. Participates in the interaction between the capsid and the tegument through interaction with the large tegument protein/LTP. The chain is Capsid vertex component 2 from Homo sapiens (Human).